Consider the following 243-residue polypeptide: Ubiquinone/menaquinone biosynthesis C-methyltransferase UbiE (243 aa).

S-adenosyl-L-methionine contacts are provided by residues Thr-69, Asp-90, and 116–117 (DA).

It belongs to the class I-like SAM-binding methyltransferase superfamily. MenG/UbiE family.

The catalysed reaction is a 2-demethylmenaquinol + S-adenosyl-L-methionine = a menaquinol + S-adenosyl-L-homocysteine + H(+). The enzyme catalyses a 2-methoxy-6-(all-trans-polyprenyl)benzene-1,4-diol + S-adenosyl-L-methionine = a 5-methoxy-2-methyl-3-(all-trans-polyprenyl)benzene-1,4-diol + S-adenosyl-L-homocysteine + H(+). Its pathway is quinol/quinone metabolism; menaquinone biosynthesis; menaquinol from 1,4-dihydroxy-2-naphthoate: step 2/2. The protein operates within cofactor biosynthesis; ubiquinone biosynthesis. Functionally, methyltransferase required for the conversion of demethylmenaquinol (DMKH2) to menaquinol (MKH2) and the conversion of 2-polyprenyl-6-methoxy-1,4-benzoquinol (DDMQH2) to 2-polyprenyl-3-methyl-6-methoxy-1,4-benzoquinol (DMQH2). This is Ubiquinone/menaquinone biosynthesis C-methyltransferase UbiE from Ralstonia pickettii (strain 12J).